The primary structure comprises 120 residues: Large ribosomal subunit protein uL18 (120 aa).

The protein belongs to the universal ribosomal protein uL18 family. As to quaternary structure, part of the 50S ribosomal subunit; part of the 5S rRNA/L5/L18/L25 subcomplex. Contacts the 5S and 23S rRNAs.

Functionally, this is one of the proteins that bind and probably mediate the attachment of the 5S RNA into the large ribosomal subunit, where it forms part of the central protuberance. The chain is Large ribosomal subunit protein uL18 from Allorhizobium ampelinum (strain ATCC BAA-846 / DSM 112012 / S4) (Agrobacterium vitis (strain S4)).